The sequence spans 81 residues: Sulfur carrier protein TusA (81 aa).

The active-site Cysteine persulfide intermediate is the Cys20.

This sequence belongs to the sulfur carrier protein TusA family.

The protein resides in the cytoplasm. Its function is as follows. Sulfur carrier protein which probably makes part of a sulfur-relay system. This Colwellia psychrerythraea (strain 34H / ATCC BAA-681) (Vibrio psychroerythus) protein is Sulfur carrier protein TusA.